Here is a 335-residue protein sequence, read N- to C-terminus: N-lysine methyltransferase KMT5A-A (335 aa).

2 disordered regions span residues 1 to 91 (MGRG…EVEK) and 133 to 183 (LPPE…EIES). A compositionally biased stretch (basic and acidic residues) spans 67 to 91 (SVTHHESKCLGKPSTETRKKAEVEK). Residues 145–161 (VKNKPLRKKTQRQKSPN) show a composition bias toward basic residues. The SET domain occupies 199-320 (EGIKMHMITG…VGEELLYDYG (122 aa)). Residues 209-211 (KGR), Tyr254, and 281-282 (NH) contribute to the S-adenosyl-L-methionine site.

The protein belongs to the class V-like SAM-binding methyltransferase superfamily. Histone-lysine methyltransferase family. PR/SET subfamily.

The protein localises to the nucleus. Its subcellular location is the chromosome. The enzyme catalyses L-lysyl(20)-[histone H4] + S-adenosyl-L-methionine = N(6)-methyl-L-lysyl(20)-[histone H4] + S-adenosyl-L-homocysteine + H(+). The catalysed reaction is L-lysyl-[protein] + S-adenosyl-L-methionine = N(6)-methyl-L-lysyl-[protein] + S-adenosyl-L-homocysteine + H(+). In terms of biological role, protein-lysine N-methyltransferase that monomethylates both histones and non-histone proteins. Specifically monomethylates 'Lys-20' of histone H4 (H4K20me1). H4K20me1 is enriched during mitosis and represents a specific tag for epigenetic transcriptional repression. Mainly functions in euchromatin regions, thereby playing a central role in the silencing of euchromatic genes. Required for cell proliferation, probably by contributing to the maintenance of proper higher-order structure of DNA during mitosis. Involved in chromosome condensation and proper cytokinesis. The chain is N-lysine methyltransferase KMT5A-A from Xenopus laevis (African clawed frog).